A 403-amino-acid chain; its full sequence is NADH-quinone oxidoreductase subunit D (403 aa).

Belongs to the complex I 49 kDa subunit family. As to quaternary structure, NDH-1 is composed of 14 different subunits. Subunits NuoB, C, D, E, F, and G constitute the peripheral sector of the complex.

It localises to the cell inner membrane. It carries out the reaction a quinone + NADH + 5 H(+)(in) = a quinol + NAD(+) + 4 H(+)(out). Functionally, NDH-1 shuttles electrons from NADH, via FMN and iron-sulfur (Fe-S) centers, to quinones in the respiratory chain. The immediate electron acceptor for the enzyme in this species is believed to be ubiquinone. Couples the redox reaction to proton translocation (for every two electrons transferred, four hydrogen ions are translocated across the cytoplasmic membrane), and thus conserves the redox energy in a proton gradient. The sequence is that of NADH-quinone oxidoreductase subunit D from Ruegeria sp. (strain TM1040) (Silicibacter sp.).